A 1388-amino-acid chain; its full sequence is DNA-directed RNA polymerase subunit beta (1388 aa).

Belongs to the RNA polymerase beta chain family. As to quaternary structure, the RNAP catalytic core consists of 2 alpha, 1 beta, 1 beta' and 1 omega subunit. When a sigma factor is associated with the core the holoenzyme is formed, which can initiate transcription.

The catalysed reaction is RNA(n) + a ribonucleoside 5'-triphosphate = RNA(n+1) + diphosphate. In terms of biological role, DNA-dependent RNA polymerase catalyzes the transcription of DNA into RNA using the four ribonucleoside triphosphates as substrates. In Xylella fastidiosa (strain 9a5c), this protein is DNA-directed RNA polymerase subunit beta.